The sequence spans 220 residues: Splicing factor U2AF 26 kDa subunit (220 aa).

A2 is modified (N-acetylalanine). A C3H1-type 1 zinc finger spans residues 12–40 (EKDKVNCSFYFKIGACRHGDRCSRLHNKP). The 83-residue stretch at 65-147 (SHCHVSDVEV…QAVHAELSPV (83 aa)) folds into the RRM domain. The segment at 149–176 (DFRESCCRQYEMGECTRGGFCNFMHLRP) adopts a C3H1-type 2 zinc-finger fold. Residues 186-220 (YGRGPRHRSPPRSHTGHRPRERNRRRSPDHRHGRF) form a disordered region. Residues 189 to 220 (GPRHRSPPRSHTGHRPRERNRRRSPDHRHGRF) show a composition bias toward basic residues.

This sequence belongs to the splicing factor SR family. Interacts with GFI1, U2AF2 and C1QBP. Isoform 3 interacts with PER1. Post-translationally, isoform 3 is rapidly degraded by a proteasome-mediated degradation pathway. In terms of tissue distribution, ubiquitous. Highly expressed in the brain.

The protein localises to the nucleus. The protein resides in the nucleus speckle. It localises to the cytoplasm. Its function is as follows. RNA-binding protein that function as a pre-mRNA splicing factor. Plays a critical role in both constitutive and enhancer-dependent splicing by mediating protein-protein interactions and protein-RNA interactions required for accurate 3'-splice site selection. It can functionally substitute for U2AF1 in constitutive splicing and enhancer-dependent splicing. Acts by enhancing the binding of U2AF2 to weak pyrimidine tracts. Also participates in the regulation of alternative pre-mRNA splicing. Activates exon 5 skipping of PTPRC during T-cell activation; an event reversed by GFI1. Binds to RNA at the AG dinucleotide at the 3'-splice site. Shows a preference for AGC or AGA. Alternative splicing of U2AF1L4 may play a role in connecting the circadian rhythm to changing external cues: may provide a circadian buffering system in central and periphery clocks that allows synchronized adaption to clock-resetting stimuli in order to prevent potentially pathogenic desynchronization. This chain is Splicing factor U2AF 26 kDa subunit (U2af1l4), found in Mus musculus (Mouse).